Here is a 40-residue protein sequence, read N- to C-terminus: Photosystem II reaction center protein J (40 aa).

The helical transmembrane segment at isoleucine 8–phenylalanine 28 threads the bilayer.

Belongs to the PsbJ family. As to quaternary structure, PSII is composed of 1 copy each of membrane proteins PsbA, PsbB, PsbC, PsbD, PsbE, PsbF, PsbH, PsbI, PsbJ, PsbK, PsbL, PsbM, PsbT, PsbX, PsbY, PsbZ, Psb30/Ycf12, at least 3 peripheral proteins of the oxygen-evolving complex and a large number of cofactors. It forms dimeric complexes.

The protein resides in the plastid. The protein localises to the chloroplast thylakoid membrane. Its function is as follows. One of the components of the core complex of photosystem II (PSII). PSII is a light-driven water:plastoquinone oxidoreductase that uses light energy to abstract electrons from H(2)O, generating O(2) and a proton gradient subsequently used for ATP formation. It consists of a core antenna complex that captures photons, and an electron transfer chain that converts photonic excitation into a charge separation. This chain is Photosystem II reaction center protein J, found in Gnetum parvifolium (Small-leaved jointfir).